We begin with the raw amino-acid sequence, 410 residues long: Lipid droplet-regulating VLDL assembly factor AUP1 (410 aa).

An N-acetylmethionine modification is found at Met1. The Cytoplasmic portion of the chain corresponds to 1–20 (MELPSGPGPERLFDSHRLPG). Ser5 bears the Phosphoserine mark. Residues 21–41 (DCFLLLVLLLYAPVGFCLLVL) lie within the membrane without spanning it. The Cytoplasmic segment spans residues 42–410 (RLFLGIHVFL…FTERRAQEAD (369 aa)). Positions 255–295 (TGTRLTPADKAEHMKRQRHPRLRPQSAQSSFPPSPGPSPDV) are disordered. Phosphoserine occurs at positions 288 and 292. Positions 296–338 (QLATLAQRVKEVLPHVPLGVIQRDLAKTGCVDLTITNLLEGAV) constitute a CUE domain. The tract at residues 350 to 369 (QSLPTASASKFPSSGPVTPQ) is disordered. Ser363 is modified (phosphoserine). A Phosphothreonine modification is found at Thr367.

Belongs to the AUP1 family. Identified in a complex that contains SEL1L, OS9, FAF2/UBXD8, UBE2J1/UBC6E and AUP1. Interacts with the cytoplasmic tail of ITGA2B, ITGA1, ITGA2, ITGA5, ITGAV and ITGAM. Interacts (via C-terminus) with ubiquitin-conjugating enzyme UBE2G2; the interaction recruits UBE2G2 to lipid droplets. Interacts with ubiquitin ligases AMFR/gp78 and RNF139/TRC8; this promotes interaction of UBE2G2 with AMFR and RNF139. Interacts with apolipoprotein APOB. As to quaternary structure, (Microbial infection) Interacts with Dengue virus NS4A; the interaction occurs in the presence of Dengue virus NS4B and induces lipophagy which facilitates production of virus progeny. Monoubiquitinated and diubiquitinated. Post-translationally, (Microbial infection) Not ubiquitinated following Dengue virus infection. Detected in blood platelets and leukocytes (at protein level). Ubiquitous. Highly expressed in placenta, liver, kidney, skeletal muscle, heart and brain.

Its subcellular location is the endoplasmic reticulum membrane. The protein resides in the lipid droplet. It localises to the cytoplasmic vesicle. It is found in the autophagosome. In terms of biological role, plays a role in the translocation of terminally misfolded proteins from the endoplasmic reticulum lumen to the cytoplasm and their degradation by the proteasome. Plays a role in lipid droplet formation. Induces lipid droplet clustering. Recruits ubiquitin-conjugating enzyme UBE2G2 to lipid droplets which facilitates its interaction with ubiquitin ligases AMFR/gp78 and RNF139/TRC8, leading to sterol-induced ubiquitination of HMGCR and its subsequent proteasomal degradation. Also required for the degradation of INSIG1, SREBF1 and SREBF2. Plays a role in regulating assembly and secretion of very low density lipoprotein particles and stability of apolipoprotein APOB. Functionally, (Microbial infection) Following Dengue virus infection, required for induction of lipophagy which facilitates production of virus progeny particles. This is Lipid droplet-regulating VLDL assembly factor AUP1 from Homo sapiens (Human).